Consider the following 87-residue polypeptide: Retinal rod rhodopsin-sensitive cGMP 3',5'-cyclic phosphodiesterase subunit gamma (87 aa).

The residue at position 1 (Met-1) is an N-acetylmethionine. Residues Met-1–Ser-12 are compositionally biased toward basic and acidic residues. Residues Met-1–Pro-55 form a disordered region. Positions Gly-26–Lys-44 are enriched in basic residues.

Belongs to the rod/cone cGMP-PDE gamma subunit family. Oligomer composed of two catalytic chains (alpha and beta), an inhibitory chain (gamma) and the delta chain.

The catalysed reaction is 3',5'-cyclic GMP + H2O = GMP + H(+). Its function is as follows. Participates in processes of transmission and amplification of the visual signal. cGMP-PDEs are the effector molecules in G-protein-mediated phototransduction in vertebrate rods and cones. This Mus musculus (Mouse) protein is Retinal rod rhodopsin-sensitive cGMP 3',5'-cyclic phosphodiesterase subunit gamma (Pde6g).